A 199-amino-acid polypeptide reads, in one-letter code: Recombination protein RecR (199 aa).

Residues 56 to 71 (CSICFNWSAEDPCEIC) form a C4-type zinc finger. Residues 79 to 174 (STWCVVADVK…GLRMTRLAFG (96 aa)) form the Toprim domain.

Belongs to the RecR family.

Functionally, may play a role in DNA repair. It seems to be involved in an RecBC-independent recombinational process of DNA repair. It may act with RecF and RecO. The chain is Recombination protein RecR from Synechococcus sp. (strain JA-3-3Ab) (Cyanobacteria bacterium Yellowstone A-Prime).